A 202-amino-acid chain; its full sequence is FMN-dependent NADH:quinone oxidoreductase (202 aa).

FMN contacts are provided by residues S9, 15-17 (SVS), 95-98 (MYNF), and 139-142 (SRGG).

It belongs to the azoreductase type 1 family. Homodimer. Requires FMN as cofactor.

The catalysed reaction is 2 a quinone + NADH + H(+) = 2 a 1,4-benzosemiquinone + NAD(+). The enzyme catalyses N,N-dimethyl-1,4-phenylenediamine + anthranilate + 2 NAD(+) = 2-(4-dimethylaminophenyl)diazenylbenzoate + 2 NADH + 2 H(+). Its function is as follows. Quinone reductase that provides resistance to thiol-specific stress caused by electrophilic quinones. Also exhibits azoreductase activity. Catalyzes the reductive cleavage of the azo bond in aromatic azo compounds to the corresponding amines. This is FMN-dependent NADH:quinone oxidoreductase from Laribacter hongkongensis (strain HLHK9).